The primary structure comprises 418 residues: Thyroid hormone receptor alpha (418 aa).

The tract at residues 1–41 is disordered; it reads MDQNLSGLDCLSEPDEKRWPDGKRKRKNSQCMGKSGMSGDS. The segment at 1–60 is modulating; sequence MDQNLSGLDCLSEPDEKRWPDGKRKRKNSQCMGKSGMSGDSSVSLLSAGYIPSYLTKDEP. Zn(2+) is bound by residues Cys61, Cys64, Cys78, Cys81, Cys99, Cys105, Cys115, and Cys118. NR C4-type zinc fingers lie at residues 61 to 81 and 99 to 123; these read CVVCSDKATGYHYRCITCEGC and CKYDGCCIIDKITRNQCQLCRFKKC. The segment at residues 61 to 135 is a DNA-binding region (nuclear receptor); sequence CVVCSDKATG…VGMAMDLVLD (75 aa). The NR LBD domain occupies 171-415; sequence EEWELIRIVT…PPLFLEVFED (245 aa). 3,3',5-triiodo-L-thyronine-binding residues include Arg236 and Ser285.

This sequence belongs to the nuclear hormone receptor family. NR1 subfamily. As to expression, highest level of expression in erythrocytes. Also expressed in liver, tail, eye, muscle and skin.

Its subcellular location is the nucleus. In terms of biological role, nuclear hormone receptor that can act as a repressor or activator of transcription. High affinity receptor for thyroid hormones, including triiodothyronine and thyroxine. This Aquarana catesbeiana (American bullfrog) protein is Thyroid hormone receptor alpha (thra).